We begin with the raw amino-acid sequence, 509 residues long: ATP synthase subunit alpha (509 aa).

Residue 171 to 178 (GDRQTGKT) participates in ATP binding.

It belongs to the ATPase alpha/beta chains family. As to quaternary structure, F-type ATPases have 2 components, CF(1) - the catalytic core - and CF(0) - the membrane proton channel. CF(1) has five subunits: alpha(3), beta(3), gamma(1), delta(1), epsilon(1). CF(0) has three main subunits: a(1), b(2) and c(9-12). The alpha and beta chains form an alternating ring which encloses part of the gamma chain. CF(1) is attached to CF(0) by a central stalk formed by the gamma and epsilon chains, while a peripheral stalk is formed by the delta and b chains.

It is found in the cell inner membrane. It carries out the reaction ATP + H2O + 4 H(+)(in) = ADP + phosphate + 5 H(+)(out). Its function is as follows. Produces ATP from ADP in the presence of a proton gradient across the membrane. The alpha chain is a regulatory subunit. The protein is ATP synthase subunit alpha of Neorickettsia sennetsu (strain ATCC VR-367 / Miyayama) (Ehrlichia sennetsu).